Reading from the N-terminus, the 153-residue chain is Ribosome maturation factor RimP (153 aa).

Belongs to the RimP family.

It localises to the cytoplasm. Its function is as follows. Required for maturation of 30S ribosomal subunits. The polypeptide is Ribosome maturation factor RimP (Coxiella burnetii (strain CbuG_Q212) (Coxiella burnetii (strain Q212))).